The sequence spans 95 residues: Protein TusB (95 aa).

The protein belongs to the DsrH/TusB family. As to quaternary structure, heterohexamer, formed by a dimer of trimers. The hexameric TusBCD complex contains 2 copies each of TusB, TusC and TusD. The TusBCD complex interacts with TusE.

It is found in the cytoplasm. Its function is as follows. Part of a sulfur-relay system required for 2-thiolation of 5-methylaminomethyl-2-thiouridine (mnm(5)s(2)U) at tRNA wobble positions. This chain is Protein TusB, found in Salmonella agona (strain SL483).